Consider the following 126-residue polypeptide: Aspartate 1-decarboxylase (126 aa).

Ser-25 (schiff-base intermediate with substrate; via pyruvic acid) is an active-site residue. A Pyruvic acid (Ser) modification is found at Ser-25. Thr-57 is a binding site for substrate. The Proton donor role is filled by Tyr-58. Position 72-74 (72-74 (GAT)) interacts with substrate.

It belongs to the PanD family. Heterooctamer of four alpha and four beta subunits. It depends on pyruvate as a cofactor. Post-translationally, is synthesized initially as an inactive proenzyme, which is activated by self-cleavage at a specific serine bond to produce a beta-subunit with a hydroxyl group at its C-terminus and an alpha-subunit with a pyruvoyl group at its N-terminus.

Its subcellular location is the cytoplasm. The catalysed reaction is L-aspartate + H(+) = beta-alanine + CO2. It participates in cofactor biosynthesis; (R)-pantothenate biosynthesis; beta-alanine from L-aspartate: step 1/1. In terms of biological role, catalyzes the pyruvoyl-dependent decarboxylation of aspartate to produce beta-alanine. The polypeptide is Aspartate 1-decarboxylase (Campylobacter jejuni subsp. doylei (strain ATCC BAA-1458 / RM4099 / 269.97)).